The primary structure comprises 372 residues: Queuine tRNA-ribosyltransferase (372 aa).

Catalysis depends on Asp92, which acts as the Proton acceptor. Substrate-binding positions include 92–96 (DSGGF), Asp146, Gln188, and Gly215. Residues 246–252 (GIGTLRE) are RNA binding. The Nucleophile role is filled by Asp265. Residues 270–274 (TRLGR) are RNA binding; important for wobble base 34 recognition. Zn(2+) is bound by residues Cys303, Cys305, Cys308, and His334.

Belongs to the queuine tRNA-ribosyltransferase family. As to quaternary structure, homodimer. Within each dimer, one monomer is responsible for RNA recognition and catalysis, while the other monomer binds to the replacement base PreQ1. Requires Zn(2+) as cofactor.

The catalysed reaction is 7-aminomethyl-7-carbaguanine + guanosine(34) in tRNA = 7-aminomethyl-7-carbaguanosine(34) in tRNA + guanine. The protein operates within tRNA modification; tRNA-queuosine biosynthesis. Its function is as follows. Catalyzes the base-exchange of a guanine (G) residue with the queuine precursor 7-aminomethyl-7-deazaguanine (PreQ1) at position 34 (anticodon wobble position) in tRNAs with GU(N) anticodons (tRNA-Asp, -Asn, -His and -Tyr). Catalysis occurs through a double-displacement mechanism. The nucleophile active site attacks the C1' of nucleotide 34 to detach the guanine base from the RNA, forming a covalent enzyme-RNA intermediate. The proton acceptor active site deprotonates the incoming PreQ1, allowing a nucleophilic attack on the C1' of the ribose to form the product. After dissociation, two additional enzymatic reactions on the tRNA convert PreQ1 to queuine (Q), resulting in the hypermodified nucleoside queuosine (7-(((4,5-cis-dihydroxy-2-cyclopenten-1-yl)amino)methyl)-7-deazaguanosine). The sequence is that of Queuine tRNA-ribosyltransferase from Synechococcus sp. (strain CC9311).